The following is a 955-amino-acid chain: Anion exchange protein 4 (955 aa).

Disordered regions lie at residues 20–50, 154–190, and 331–352; these read VGQLDSGPSSGPCPDDPSDTGSRELGPPEDP, HTQTTGSRPCWGPAQSRKAAHNKEAPMQQQCQSPLRQ, and PHRTQAEDRHRNGPLAPSPELQ. 4 consecutive transmembrane segments (helical) span residues 387–407, 415–435, 472–492, and 503–523; these read AVLYIYLATVTNAITFGGLLG, GVLESLLGTAVAGAAFCLMAG, VGIWVAVFCLALVATEASVLV, and FCALISLIFIYDAVGKMLNLA. The segment at 387-955 is membrane (anion exchange); sequence AVLYIYLATV…KAPEINISVN (569 aa). N-linked (GlcNAc...) asparagine glycosylation is found at Asn-548 and Asn-572. Transmembrane regions (helical) follow at residues 596-616, 637-657, 684-704, 730-750, 785-804, 811-830, and 871-891; these read VPDIAFFSLLLFLTSFLFAIA, FSSILAILLGCGLDALLGLAM, PWWLSVAAALPALLLSILIFM, LFCVALLMLLTSVLGLPWYVS, LTGLAVFTLTGVSIFLAPVL, VLYGIFLYMGVAALSSIQFM, and LWIIKSTPAAIIFPLMLLGLV. The tract at residues 918–955 is disordered; the sequence is RNVPEKGLEPGHSFSGSDSEDSELMYQPKAPEINISVN. Asn-951 carries an N-linked (GlcNAc...) asparagine glycan.

This sequence belongs to the anion exchanger (TC 2.A.31) family. In terms of tissue distribution, highly expressed in kidney. Expressed in the outer medulla and the inner medulla in the kidney cortex. Only expressed in beta-intercalated cells.

The protein resides in the lateral cell membrane. The protein localises to the apical cell membrane. Its subcellular location is the basolateral cell membrane. The enzyme catalyses 2 hydrogencarbonate(out) + chloride(in) + Na(+)(out) = 2 hydrogencarbonate(in) + chloride(out) + Na(+)(in). It carries out the reaction K(+)(in) + 2 hydrogencarbonate(in) + chloride(out) = K(+)(out) + 2 hydrogencarbonate(out) + chloride(in). It catalyses the reaction Li(+)(in) + 2 hydrogencarbonate(in) + chloride(out) = Li(+)(out) + 2 hydrogencarbonate(out) + chloride(in). The catalysed reaction is Rb(+)(in) + 2 hydrogencarbonate(in) + chloride(out) = Rb(+)(out) + 2 hydrogencarbonate(out) + chloride(in). The enzyme catalyses Cs(+)(in) + 2 hydrogencarbonate(in) + chloride(out) = Cs(+)(out) + 2 hydrogencarbonate(out) + chloride(in). Its function is as follows. Electroneutral Cl(-)/HCO3(-) antiporter that favors chloride ion entry and efflux of hydrogencarbonate and sodium ion across the basolateral membrane and may participat in salivary secretion. Also mediates Cl(-)/HCO3(-) exchange activity in the presence of K(+) as well as Cs(+), Li(+), and Rb(+). Does not contribute to Cl(-)/HCO3(-) exchanger in the apical membrane of the upper villous epithelium. The chain is Anion exchange protein 4 from Oryctolagus cuniculus (Rabbit).